The chain runs to 80 residues: Small ribosomal subunit protein bS16 (80 aa).

Belongs to the bacterial ribosomal protein bS16 family.

In Nitrosococcus oceani (strain ATCC 19707 / BCRC 17464 / JCM 30415 / NCIMB 11848 / C-107), this protein is Small ribosomal subunit protein bS16.